We begin with the raw amino-acid sequence, 249 residues long: MMRILVSNDDGVNAPGIKALTEALAEIATVMTVAPDRNCSGASNSLTLTNPLRINRLDNGYISVHGTPTDCVHLAIRELCDGEPDMVVSGINAGANMGDDTLYSGTVAAAMEGRFLGFPAVAISLNGKAFKHYHTAAVYARRIVQGLLAHPIASDQILNINVPDLPLDEIKGISVTRLGARHKAEGIVRTQDPAGREIFWLGPPGLEQDASEGTDFHAIAHGYVSITPLTVDLTAYRQLSILQNWVDKI.

A divalent metal cation-binding residues include D9, D10, S40, and N92.

It belongs to the SurE nucleotidase family. Requires a divalent metal cation as cofactor.

It is found in the cytoplasm. It catalyses the reaction a ribonucleoside 5'-phosphate + H2O = a ribonucleoside + phosphate. Its function is as follows. Nucleotidase that shows phosphatase activity on nucleoside 5'-monophosphates. This Shewanella oneidensis (strain ATCC 700550 / JCM 31522 / CIP 106686 / LMG 19005 / NCIMB 14063 / MR-1) protein is 5'-nucleotidase SurE.